The sequence spans 509 residues: Maturase K (509 aa).

The protein belongs to the intron maturase 2 family. MatK subfamily.

Its subcellular location is the plastid. It localises to the chloroplast. In terms of biological role, usually encoded in the trnK tRNA gene intron. Probably assists in splicing its own and other chloroplast group II introns. This is Maturase K from Clematis florida (Asian virgin's bower).